A 467-amino-acid polypeptide reads, in one-letter code: Gamma-aminobutyric acid receptor subunit gamma-3 (467 aa).

The N-terminal stretch at 1-17 (MAAKLLLLLCLFSGLHA) is a signal peptide. Residues 18–256 (RSRRVEEDDS…FELSRRMGYF (239 aa)) are Extracellular-facing. Residue Asn-110 is glycosylated (N-linked (GlcNAc...) asparagine). Cys-171 and Cys-185 are joined by a disulfide. The N-linked (GlcNAc...) asparagine glycan is linked to Asn-228. Residues 257-277 (TIQTYIPCILTVVLSWVSFWI) form a helical membrane-spanning segment. Residues 278 to 283 (KKDATP) lie on the Cytoplasmic side of the membrane. The chain crosses the membrane as a helical span at residues 284-303 (ARTTLGITTVLTMTTLSTIA). Topologically, residues 304-311 (RKSLPRVS) are extracellular. The helical transmembrane segment at 312 to 332 (YVTAMDLFVTVCFLFVFAALM) threads the bilayer. Residues 333-446 (EYATLNYYSS…DVSELDSYSR (114 aa)) are Cytoplasmic-facing. A helical membrane pass occupies residues 447–467 (VFFPTSFLLFNLVYWVGYLYL).

This sequence belongs to the ligand-gated ion channel (TC 1.A.9) family. Gamma-aminobutyric acid receptor (TC 1.A.9.5) subfamily. GABRG3 sub-subfamily. As to quaternary structure, heteropentamer, formed by a combination of alpha (GABRA1-6), beta (GABRB1-3), gamma (GABRG1-3), delta (GABRD), epsilon (GABRE), rho (GABRR1-3), pi (GABRP) and theta (GABRQ) chains, each subunit exhibiting distinct physiological and pharmacological properties. May be palmitoylated. In terms of tissue distribution, expressed in brain.

It is found in the postsynaptic cell membrane. The protein resides in the cell membrane. The enzyme catalyses chloride(in) = chloride(out). Allosterically potentiated by alphaxalone. Allosterically inhibited by pregnenolone sulfate. Inhibited by zinc and lanthanum. Gamma subunit of the heteropentameric ligand-gated chloride channel gated by gamma-aminobutyric acid (GABA), a major inhibitory neurotransmitter in the brain. GABA-gated chloride channels, also named GABA(A) receptors (GABAAR), consist of five subunits arranged around a central pore and contain GABA active binding site(s) located at the alpha and beta subunit interface(s). When activated by GABA, GABAARs selectively allow the flow of chloride across the cell membrane down their electrochemical gradient. The chain is Gamma-aminobutyric acid receptor subunit gamma-3 from Rattus norvegicus (Rat).